The following is a 633-amino-acid chain: Probable methyltransferase PMT15 (633 aa).

Topologically, residues Met1–Arg24 are cytoplasmic. The chain crosses the membrane as a helical; Signal-anchor for type II membrane protein span at residues Val25–Gly45. The Lumenal segment spans residues Arg46–Pro633. Residues Asn113 and Asn298 are each glycosylated (N-linked (GlcNAc...) asparagine).

Belongs to the methyltransferase superfamily.

It localises to the golgi apparatus membrane. This Arabidopsis thaliana (Mouse-ear cress) protein is Probable methyltransferase PMT15.